A 722-amino-acid polypeptide reads, in one-letter code: Zinc finger protein 219 (722 aa).

The segment at 1 to 21 is disordered; it reads MEGSRPRAPSGHLAPSPPAFD. At Ser16 the chain carries Phosphoserine. 2 consecutive C2H2-type zinc fingers follow at residues 57–79 and 85–107; these read FPCP…LRAH and FQCP…LRTH. Residues 137–160 are disordered; sequence ARSSGGMQATPATEGLARPQAPSS. 2 consecutive C2H2-type zinc fingers follow at residues 163-186 and 189-212; these read FRCP…HILH and WKCG…LTAH. The tract at residues 215 to 275 is disordered; sequence PERPLAATSA…EEPPAPPEFR (61 aa). 2 stretches are compositionally biased toward pro residues: residues 225 to 247 and 259 to 272; these read APPP…PQPE and TPAP…PAPP. 2 C2H2-type zinc fingers span residues 274 to 296 and 302 to 324; these read FRCQ…MRKH and HACP…MKVH. Positions 384 to 495 are disordered; that stretch reads LRAGEGRPNG…GTRPEGGRGA (112 aa). The segment covering 390 to 404 has biased composition (gly residues); the sequence is RPNGEGAEPGPGRSF. Positions 425–438 are enriched in acidic residues; it reads EPEEEEEVVEAEEE. A compositionally biased stretch (low complexity) spans 463–477; the sequence is SASAAGAQARSTATQ. C2H2-type zinc fingers lie at residues 498–520 and 526–548; these read KDCP…LRVH and YKCP…LQRH. 2 disordered regions span residues 542–648 and 668–722; these read KYHL…LHRC and HHSR…GQER. Residues 558 to 568 are compositionally biased toward pro residues; sequence PGPPPEPPPPS. Over residues 634-643 the composition is skewed to gly residues; that stretch reads GPGGEAGPGG. The C2H2-type 9 zinc-finger motif lies at 646–668; the sequence is HRCLFCPFATGAPELMALHLQVH. Over residues 668–677 the composition is skewed to basic residues; sequence HHSRRARGRR. The residue at position 692 (Ser692) is a Phosphoserine. Thr695 is subject to Phosphothreonine. Ser698 is modified (phosphoserine).

Belongs to the krueppel C2H2-type zinc-finger protein family. Interacts with SOX9 (via C-terminus). Ubiquitous.

It is found in the nucleus. Its function is as follows. Transcriptional regulator. Recognizes and binds 2 copies of the core DNA sequence motif 5'-GGGGG-3'. Binds to the HMGN1 promoter and may repress HMGN1 expression. Regulates SNCA expression in primary cortical neurons. Binds to the COL2A1 promoter and activates COL2A1 expression, as part of a complex with SOX9. Plays a role in chondrocyte differentiation. The protein is Zinc finger protein 219 (ZNF219) of Homo sapiens (Human).